Consider the following 140-residue polypeptide: MNRTEAREWVVKMLYQYDVSRLPISKILENFYKEKDPGEQKEYIENTVIGAIEHLEEIDKEIERYSQNWALNRMPKIDLAILRCSIYEMQYGNIPVNISINEAVEIAKKYSTEDSPAFINGLLGAFVRDEGLEEGESNDN.

This sequence belongs to the NusB family.

Its function is as follows. Involved in transcription antitermination. Required for transcription of ribosomal RNA (rRNA) genes. Binds specifically to the boxA antiterminator sequence of the ribosomal RNA (rrn) operons. This is Transcription antitermination protein NusB from Thermoanaerobacter pseudethanolicus (strain ATCC 33223 / 39E) (Clostridium thermohydrosulfuricum).